The chain runs to 142 residues: Putative nickel-responsive regulator (142 aa).

Residues His-77, His-88, His-90, and Cys-96 each contribute to the Ni(2+) site.

The protein belongs to the transcriptional regulatory CopG/NikR family. As to quaternary structure, homotetramer. It depends on Ni(2+) as a cofactor.

Functionally, transcriptional regulator. This is Putative nickel-responsive regulator from Halobacterium salinarum (strain ATCC 700922 / JCM 11081 / NRC-1) (Halobacterium halobium).